The primary structure comprises 621 residues: F-box/LRR-repeat protein 4 (621 aa).

Position 28 is an asymmetric dimethylarginine (arginine 28). In terms of domain architecture, F-box spans 277–332; it reads NGYFDKLPYELIQLILNHLTLPDLCRLAQTCKLLSQHCCDPLQYIHLNLQPYWAKL. LRR repeat units lie at residues 376-397, 402-421, 427-448, 452-474, 480-501, 504-524, 532-558, 559-583, and 584-609; these read ELVR…EVIS, NLQA…AFNH, SLKR…SILN, ELQH…ASMI, KLRT…AELA, CPLL…STGC, LPNL…ACNC, TRLQ…LLES, and CKDL…LNAS.

As to quaternary structure, part of a SCF (SKP1-CUL1-F-box) protein ligase complex. Interacts with VCP. Interacts with PPTC7; this interaction promotes destruction of BNIP3 and NIX and mitophagy suppression. As to expression, expressed in heart, kidney, liver, lung, pancreas, and placenta, but not in skeletal muscle.

It is found in the cytoplasm. It localises to the nucleus. Its subcellular location is the mitochondrion outer membrane. In terms of biological role, substrate-recognition component of the mitochondria-localized SCF-FBXL4 ubiquitin E3 ligase complex that plays a role in the restriction of mitophagy by controlling the degradation of BNIP3 and NIX mitophagy receptors. Rescues also mitochondrial injury through reverting hyperactivation of DRP1-mediated mitochondrial fission. The polypeptide is F-box/LRR-repeat protein 4 (FBXL4) (Homo sapiens (Human)).